The following is an 891-amino-acid chain: Nitrate reductase [NAD(P)H] (891 aa).

Residues 1–78 form a disordered region; sequence MAASVEYNRQ…VKDPRDEATS (78 aa). Over residues 63 to 76 the composition is skewed to basic and acidic residues; it reads LDVEPSVKDPRDEA. Mo-molybdopterin is bound at residue Cys-168. In terms of domain architecture, Cytochrome b5 heme-binding spans 515–590; sequence SAQFTMSEVR…LEMYRVGELI (76 aa). Positions 550 and 573 each coordinate heme. One can recognise an FAD-binding FR-type domain in the interval 630 to 742; it reads REKVRCRLVD…KGPVGHIEYA (113 aa). FAD contacts are provided by residues 682–685, 699–703, Phe-704, Phe-711, 716–718, and Thr-769; these read RAYT, LIKIY, and LMS.

The protein belongs to the nitrate reductase family. As to quaternary structure, homodimer. FAD is required as a cofactor. The cofactor is heme. Requires Mo-molybdopterin as cofactor.

The enzyme catalyses nitrite + NAD(+) + H2O = nitrate + NADH + H(+). It catalyses the reaction nitrite + NADP(+) + H2O = nitrate + NADPH + H(+). In terms of biological role, nitrate reductase is a key enzyme involved in the first step of nitrate assimilation in plants, fungi and bacteria. The protein is Nitrate reductase [NAD(P)H] (NAR-7) of Hordeum vulgare (Barley).